Reading from the N-terminus, the 372-residue chain is GDP-mannose 4,6-dehydratase (372 aa).

Residues 9–14 (GVTGQD), 64–65 (DL), 86–90 (LGAQS), and tyrosine 101 contribute to the NADP(+) site. The active site involves threonine 133. Catalysis depends on nucleophile residues glutamate 135 and tyrosine 157. Residues lysine 161, histidine 187, and arginine 192 each contribute to the NADP(+) site.

It belongs to the NAD(P)-dependent epimerase/dehydratase family. GDP-mannose 4,6-dehydratase subfamily. The cofactor is NADP(+).

It carries out the reaction GDP-alpha-D-mannose = GDP-4-dehydro-alpha-D-rhamnose + H2O. Its pathway is nucleotide-sugar biosynthesis; GDP-L-fucose biosynthesis via de novo pathway; GDP-L-fucose from GDP-alpha-D-mannose: step 1/2. Catalyzes the conversion of GDP-D-mannose to GDP-4-dehydro-6-deoxy-D-mannose. The protein is GDP-mannose 4,6-dehydratase of Vibrio cholerae.